The sequence spans 188 residues: GTPase KRas (188 aa).

GTP contacts are provided by residues 10 to 18 (GAGGVGKSA), 29 to 35 (VDEYDPT), 59 to 60 (AG), and 116 to 119 (NKCD). The short motif at 32-40 (YDPTIEDSY) is the Effector region element. Residues 168–188 (EKMSKDGKKKKKKTKTKCIIM) are disordered. At cysteine 185 the chain carries Cysteine methyl ester. A lipid anchor (S-farnesyl cysteine) is attached at cysteine 185. A propeptide spans 186-188 (IIM) (removed in mature form).

This sequence belongs to the small GTPase superfamily. Ras family.

It localises to the cell membrane. The protein resides in the cytoplasm. It catalyses the reaction GTP + H2O = GDP + phosphate + H(+). With respect to regulation, alternates between an inactive form bound to GDP and an active form bound to GTP. Activated by a guanine nucleotide-exchange factor (GEF) and inactivated by a GTPase-activating protein (GAP). Its function is as follows. Ras proteins bind GDP/GTP and possess intrinsic GTPase activity. Plays an important role in the regulation of cell proliferation. May play a role in promoting oncogenic events by inducing transcriptional silencing of tumor suppressor genes (TSGs). The polypeptide is GTPase KRas (KRAS) (Meleagris gallopavo (Wild turkey)).